The primary structure comprises 699 residues: Kinesin-like protein KIF3A (699 aa).

Positions 14–345 constitute a Kinesin motor domain; that stretch reads NVKVVVRCRP…LRYANRAKNI (332 aa). 100–107 provides a ligand contact to ATP; that stretch reads GQTGTGKT. Residues 355–590 adopt a coiled-coil conformation; it reads PKDALLRQFQ…LSRELRLQML (236 aa). 2 disordered regions span residues 372–421 and 663–699; these read KKLE…KMIE and SLMK…SLLQ. The segment covering 376-400 has biased composition (acidic residues); the sequence is EGEEISGSDISGSEEDDDEEGEVGE. Residues 672-687 show a composition bias toward basic residues; the sequence is TSKGKARPKTGRRKRS. Phosphoserine is present on serine 687. The globular stretch occupies residues 697–699; sequence LLQ.

Belongs to the TRAFAC class myosin-kinesin ATPase superfamily. Kinesin family. Kinesin II subfamily. In terms of assembly, heterodimer of KIF3A and KIF3B. Interacts with CIMAP3. Interacts with CLN3. Interacts with DCTN1. Interacts with FLCN. Interacts with AP3B1.

The protein localises to the cytoplasm. The protein resides in the cytoskeleton. It is found in the cell projection. Its subcellular location is the cilium. It localises to the microtubule organizing center. The protein localises to the centrosome. The protein resides in the centriole. Its function is as follows. Microtubule-based anterograde translocator for membranous organelles. Plus end-directed microtubule sliding activity in vitro. Plays a role in primary cilia formation. Plays a role in centriole cohesion and subdistal appendage organization and function. Regulates the formation of the subdistal appendage via recruitment of DCTN1 to the centriole. Also required for ciliary basal feet formation and microtubule anchoring to mother centriole. The protein is Kinesin-like protein KIF3A (KIF3A) of Homo sapiens (Human).